The chain runs to 821 residues: Calpain-3 (821 aa).

The disordered stretch occupies residues 1–34; the sequence is MPTVISASMAPRTGASQVPRTMPQAAQGKGTEAG. Residues 73–417 form the Calpain catalytic domain; sequence LYLDPEFPPD…FTKLEICNLT (345 aa). Active-site residues include Cys128, His334, and Asn358. A domain III region spans residues 418-586; it reads ADALESDKLQ…KRNLSEEVEN (169 aa). The tract at residues 587–649 is linker; it reads TISVDRPVRK…EPSNTDQESE (63 aa). The tract at residues 603 to 652 is disordered; it reads IFVSDRANSNKELGVDQESEEGQDKTSPDKQEKSPKPEPSNTDQESEEQQ. Positions 624-638 are enriched in basic and acidic residues; it reads GQDKTSPDKQEKSPK. Residues 641 to 652 are compositionally biased toward polar residues; the sequence is PSNTDQESEEQQ. EF-hand domains follow at residues 649–683, 692–725, 722–757, and 787–821; these read EEQQ…VVNK, FTLE…KKIK, KKIK…AGFH, and VRLE…TMYA. The segment at 650–821 is domain IV; it reads EQQQFRNIFR…LEWLQLTMYA (172 aa). Ca(2+)-binding residues include Ala662, Asp665, Glu667, Glu672, Asp705, Asp707, Ser709, Arg711, Glu716, Asp735, Asp737, Ser739, Thr741, Glu746, Asp800, Asp802, Asp804, and Ile806.

Belongs to the peptidase C2 family. Homodimer; via EF-hand domain 4. Interacts with TTN/titin. Interacts with CMYA5; this interaction, which results in CMYA5 proteolysis, may protect CAPN3 from autolysis. Interacts with SIMC1. Interacts with UTP25; the interaction is required for CAPN3 translocation to the nucleolus. In terms of tissue distribution, skeletal muscle.

The protein resides in the cytoplasm. It is found in the nucleus. Its subcellular location is the nucleolus. The enzyme catalyses Broad endopeptidase activity.. Activated by micromolar concentrations of calcium and inhibited by calpastatin. In terms of biological role, calcium-regulated non-lysosomal thiol-protease. Proteolytically cleaves CTBP1. Mediates, with UTP25, the proteasome-independent degradation of p53/TP53. The polypeptide is Calpain-3 (CAPN3) (Sus scrofa (Pig)).